A 78-amino-acid chain; its full sequence is Large ribosomal subunit protein bL28 (78 aa).

This sequence belongs to the bacterial ribosomal protein bL28 family.

This Prochlorococcus marinus (strain AS9601) protein is Large ribosomal subunit protein bL28.